Consider the following 937-residue polypeptide: MKMRAITAMLLLVLSGQCGILAGKVNKHKPWIETSYHGVITENMDTVMLDPPLVALDKDAPVPYAGEICAFKIHGQEAPFEAEVLNRTSGEGVLRARGPIDCEQQKEYTFIIQAYDCGASPNGADWKKSHKAVVHIQVDDVNEFSPVFREPLYRATVTEGKIYDSILQVEAWDQDCSPQYSQICNYEIVTQDTPFAIDRNGNIRNTERLSFDKQQHYKIMVTAYDCGQKRAMESVPVHIDVKPVCKPGWQGWNKRVDYEPGTGSKQLFPKMHLETCDGPLSSVRAMVELQTSHIGKGCDRETYSEKSLQKLCGAASGSTDLLPAPSTSTNWTASLLTDSGRDSDLIFRFDGRQAANIPDWVVPQNLTDQFTIATWMKHGPSPGLRAEKETLLCNSDKTEMNRHHYSLYVHNCRLVFLLRRDFIQLDSFRPAEFHWRLEQICDKEWHYYVINVEFPSVTLFVDGVTYEPYLVTDDWPIHPSEIDVQLTVGACWQGGEVTTPRFTQYFRGSLSGLTIRPGKIATQKVISCLQACKEGLDISSLESLGKGIKFHFNPAQSVLVMEADDLESINTAMTKVSYINSRQFPTPGLRKLHITTTVQCFGEDTCISIPEIKAMVMVLPPSEPRITIAGVERLVWPSAQLRAPVGVALFKDIHIISTVTKTDATLSIARRPGVLELMHNLDYCDVLVIGEELDPERESLEIHHSSLLGKHLDATNSTSGISIYGVDSMAHYEQAIRQVRYRNWKPGSLSERRFRLSCSELNGRYTSNEFNLEIGVVHSSEAVEHVNHMAVQSQFMRPVHHPLVVHTVNSDHISGTPPAATVVIVMCIAALVVIVVLGIYRIHTTHQDSSKEDEEERKDPEMDWDNSNLNSIEGTQIAEEVREEEPEEDEDEDEEDDDLAGDLSSAESEDSDEDEETNIQKGKVKGKLEWDPSTLPY.

Positions 1 to 22 (MKMRAITAMLLLVLSGQCGILA) are cleaved as a signal peptide. The Extracellular segment spans residues 23–818 (GKVNKHKPWI…NSDHISGTPP (796 aa)). 2 consecutive Cadherin domains span residues 32–148 (IETS…SPVF) and 149–249 (REPL…KPGW). Residue Asn86 is glycosylated (N-linked (GlcNAc...) asparagine). Residues Asn330, Asn365, and Asn716 are each glycosylated (N-linked (GlcNAc...) asparagine). The helical transmembrane segment at 819-839 (AATVVIVMCIAALVVIVVLGI) threads the bilayer. At 840 to 937 (YRIHTTHQDS…LEWDPSTLPY (98 aa)) the chain is on the cytoplasmic side. The tract at residues 846 to 937 (HQDSSKEDEE…LEWDPSTLPY (92 aa)) is disordered. Over residues 865-874 (DNSNLNSIEG) the composition is skewed to polar residues. Composition is skewed to acidic residues over residues 881–900 (VREEEPEEDEDEDEEDDDLA) and 907–917 (ESEDSDEDEET).

It belongs to the calsyntenin family. In terms of assembly, homooligomer and heterooligomer; mediates both homophilic and heterophilc interactions with clstn1 and clstn3 paralogs via cadherin domains. In terms of tissue distribution, by 48 hours post-fertilization (hpf), widely expressed in the brain, with strong expression in the telencephalon and the midbrain.

It localises to the postsynaptic cell membrane. It is found in the endoplasmic reticulum membrane. The protein localises to the golgi apparatus membrane. Its subcellular location is the cell projection. The protein resides in the dendrite. Its function is as follows. Postsynaptic adhesion molecule. Promotes synapse development by acting as a cell adhesion molecule at the postsynaptic membrane, which associates with presynaptic neurexins. The sequence is that of Calsyntenin-2 (clstn2a) from Danio rerio (Zebrafish).